The chain runs to 269 residues: RBPJ-interacting and tubulin-associated protein 1 (269 aa).

Residues 5–17 carry the Nuclear export signal motif; sequence VELAVSGMQTLGL. 2 disordered regions span residues 66 to 105 and 141 to 269; these read VGKE…PISH and LWTP…PPWK. Positions 80-92 are enriched in polar residues; sequence CETTPSRGSTPTL. The short motif at 92-108 is the Nuclear localization signal element; that stretch reads LTPRKKNKYRPISHTPS. Residues 128–156 are interaction with RBPJ/RBPSUH; that stretch reads RMAKGDAAKLRALLWTPPPTPRGSHSPRP. Positions 156–269 are interaction with tubulin; that stretch reads PREAPLRAIH…ATQKPKPPWK (114 aa). Positions 200–253 are enriched in polar residues; the sequence is HSLTHLNVPSTGHPATSAPHTNGPQDLRPSTSGVTFRSPLVTSRARSVSISVPS.

The protein belongs to the RITA family. Interacts with RBPJ/RBPSUH.

It localises to the cytoplasm. The protein resides in the nucleus. The protein localises to the cytoskeleton. It is found in the microtubule organizing center. Its subcellular location is the centrosome. Tubulin-binding protein that acts as a negative regulator of Notch signaling pathway. Shuttles between the cytoplasm and the nucleus and mediates the nuclear export of RBPJ/RBPSUH, thereby preventing the interaction between RBPJ/RBPSUH and NICD product of Notch proteins (Notch intracellular domain), leading to down-regulate Notch-mediated transcription. May play a role in neurogenesis. In Homo sapiens (Human), this protein is RBPJ-interacting and tubulin-associated protein 1 (RITA1).